The chain runs to 206 residues: Nucleoside triphosphate pyrophosphatase (206 aa).

The active-site Proton acceptor is the Asp-76.

It belongs to the Maf family. It depends on a divalent metal cation as a cofactor.

It localises to the cytoplasm. It carries out the reaction a ribonucleoside 5'-triphosphate + H2O = a ribonucleoside 5'-phosphate + diphosphate + H(+). The enzyme catalyses a 2'-deoxyribonucleoside 5'-triphosphate + H2O = a 2'-deoxyribonucleoside 5'-phosphate + diphosphate + H(+). In terms of biological role, nucleoside triphosphate pyrophosphatase. May have a dual role in cell division arrest and in preventing the incorporation of modified nucleotides into cellular nucleic acids. This chain is Nucleoside triphosphate pyrophosphatase, found in Streptomyces coelicolor (strain ATCC BAA-471 / A3(2) / M145).